We begin with the raw amino-acid sequence, 148 residues long: Large ribosomal subunit protein bL9 (148 aa).

It belongs to the bacterial ribosomal protein bL9 family.

Its function is as follows. Binds to the 23S rRNA. The sequence is that of Large ribosomal subunit protein bL9 from Chloroflexus aurantiacus (strain ATCC 29366 / DSM 635 / J-10-fl).